Consider the following 110-residue polypeptide: Large ribosomal subunit protein uL22 (110 aa).

It belongs to the universal ribosomal protein uL22 family. Part of the 50S ribosomal subunit.

This protein binds specifically to 23S rRNA; its binding is stimulated by other ribosomal proteins, e.g. L4, L17, and L20. It is important during the early stages of 50S assembly. It makes multiple contacts with different domains of the 23S rRNA in the assembled 50S subunit and ribosome. Functionally, the globular domain of the protein is located near the polypeptide exit tunnel on the outside of the subunit, while an extended beta-hairpin is found that lines the wall of the exit tunnel in the center of the 70S ribosome. This chain is Large ribosomal subunit protein uL22, found in Stutzerimonas stutzeri (strain A1501) (Pseudomonas stutzeri).